The primary structure comprises 93 residues: Small ribosomal subunit protein uS19 (93 aa).

The protein belongs to the universal ribosomal protein uS19 family.

In terms of biological role, protein S19 forms a complex with S13 that binds strongly to the 16S ribosomal RNA. The polypeptide is Small ribosomal subunit protein uS19 (Tropheryma whipplei (strain TW08/27) (Whipple's bacillus)).